Consider the following 301-residue polypeptide: Probable alpha-L-glutamate ligase 2 (301 aa).

In terms of domain architecture, ATP-grasp spans 104-287 (LQLLSRKSIG…VADKIIQFIE (184 aa)). ATP is bound by residues K141, 178–179 (EY), D187, and 211–213 (RSN). Mg(2+) is bound by residues D248, E260, and N262. Mn(2+) is bound by residues D248, E260, and N262.

The protein belongs to the RimK family. Mg(2+) serves as cofactor. Requires Mn(2+) as cofactor.

This Shewanella denitrificans (strain OS217 / ATCC BAA-1090 / DSM 15013) protein is Probable alpha-L-glutamate ligase 2.